Consider the following 505-residue polypeptide: MTERIRNVALRSKVCPAETASELIKHGDVVGTSGFTGAGYPKEVPKALAQRMEAAHDRGEKYQISLITGASTGPQLDGELAKANGVYFRSPFNTDATMRNRINAGETEYFDNHLGQVAGRAVQGNYGKFNIALVEATAITEDGGIVPTSSVGNSQTFLNLAEKVIIEVNEWQNPMLEGIHDIWDGNVSGVPTRDIVPIVRADQRVGGPVLRVNPDKIAAIVRTNDRDRNAPFAAPDETAKAIAGYLLDFFGHEVKQNRLPPSLLPLQSGVGNVANAVLEGLKEGPFENLVGYSEVIQDGMLAMLDSGRMRIASASSFSLSPEAAEEINNRMDFFRSKIILRQQDVSNSPGIIRRLGCIAMNGMIEADIYGNVNSTRVMGSKMMNGIGGSGDFARSSYLSIFLSPSTAKGGKISAIVPMAAHVDHIMQDAQIFVTEQGLADLRGLSPVQRAREIISKCAHPDYRPMLQDYFDRALKNSFGKHTPHLLTEALSWHQRFIDTGTMLPS.

CoA is bound at residue 269 to 273 (GVGNV). Glu294 acts as the 5-glutamyl coenzyme A thioester intermediate in catalysis. CoA is bound by residues Ile364, Asn384, Gly388, and Lys408.

Belongs to the acetyl-CoA hydrolase/transferase family. As to quaternary structure, homodimer.

The catalysed reaction is succinyl-CoA + acetate = succinate + acetyl-CoA. The protein operates within metabolic intermediate biosynthesis; acetyl-CoA biosynthesis. Its activity is regulated as follows. Subject to competitive inhibition by coenzyme A (CoA). Functionally, utilizes succinyl-CoA to convert toxic acetate to acetyl-CoA and succinate. Required for growth on acetic acid and for resistance to high levels of acetic acid. Also has low activity with acetoacetate as substrate. This chain is Succinyl-CoA:acetate CoA-transferase, found in Acetobacter aceti.